The sequence spans 102 residues: U3-aranetoxin-Ce1a (102 aa).

The N-terminal stretch at 1–21 (MKHLSIFFVFFCCICVMLCDA) is a signal peptide.

This sequence belongs to the neurotoxin 20 family. In terms of tissue distribution, expressed by the venom gland.

It is found in the secreted. The protein is U3-aranetoxin-Ce1a of Caerostris extrusa (Bark spider).